The primary structure comprises 270 residues: Bacterial microcompartment shell protein PduB (270 aa).

The probable helix that binds cargo to the BMC shell stretch occupies residues 6 to 18; sequence LVEQIMAQVIARV. BMC circularly permuted domains follow at residues 47–152 and 154–258; these read EFVG…DRTF and DVYG…LATL.

The protein belongs to the EutL/PduB family. In terms of assembly, homotrimerizes to form a pseudohexamer with a central pore. The trimers pack into an array. In purified BMCs seen as a 28.0 kDa and 25.0 kDa form, both of which have been N-terminally sequenced and whose N-fMet is removed; the smaller form is called PduB'.

It localises to the bacterial microcompartment. It functions in the pathway polyol metabolism; 1,2-propanediol degradation. Functionally, the two proteins produced are among the major shell proteins of the bacterial microcompartment (BMC) dedicated to 1,2-propanediol (1,2-PD) degradation. Required for structural integrity of BMCs and to mitigate propionaldehyde toxicity. The N-terminal 13 residues are important for correct assembly of the BMC shell. The isolated BMC shell component protein ratio for J:A:B':B:K:T:U is approximately 15:10:7:6:1:1:2. The N-terminus of the long form (PduB) is required for correct formation of BMCs, deletions in the first 37 residues have substantially reduced levels of the major lumen enzymes. May play a major role in binding the enzyme contents to the shell. The 1,2-PD-specific bacterial microcompartment (BMC) concentrates low levels of 1,2-PD catabolic enzymes, concentrates volatile reaction intermediates thus enhancing pathway flux and keeps the level of toxic, mutagenic propionaldehyde low. In Salmonella typhimurium (strain LT2 / SGSC1412 / ATCC 700720), this protein is Bacterial microcompartment shell protein PduB.